The primary structure comprises 348 residues: UDP-3-O-acylglucosamine N-acyltransferase (348 aa).

Residue histidine 257 is the Proton acceptor of the active site.

The protein belongs to the transferase hexapeptide repeat family. LpxD subfamily. As to quaternary structure, homotrimer.

The catalysed reaction is a UDP-3-O-[(3R)-3-hydroxyacyl]-alpha-D-glucosamine + a (3R)-hydroxyacyl-[ACP] = a UDP-2-N,3-O-bis[(3R)-3-hydroxyacyl]-alpha-D-glucosamine + holo-[ACP] + H(+). Its pathway is bacterial outer membrane biogenesis; LPS lipid A biosynthesis. Its function is as follows. Catalyzes the N-acylation of UDP-3-O-acylglucosamine using 3-hydroxyacyl-ACP as the acyl donor. Is involved in the biosynthesis of lipid A, a phosphorylated glycolipid that anchors the lipopolysaccharide to the outer membrane of the cell. The sequence is that of UDP-3-O-acylglucosamine N-acyltransferase from Bartonella quintana (strain Toulouse) (Rochalimaea quintana).